A 201-amino-acid polypeptide reads, in one-letter code: Large ribosomal subunit protein bL25 (201 aa).

It belongs to the bacterial ribosomal protein bL25 family. CTC subfamily. In terms of assembly, part of the 50S ribosomal subunit; part of the 5S rRNA/L5/L18/L25 subcomplex. Contacts the 5S rRNA. Binds to the 5S rRNA independently of L5 and L18.

Its function is as follows. This is one of the proteins that binds to the 5S RNA in the ribosome where it forms part of the central protuberance. This Chlorobaculum parvum (strain DSM 263 / NCIMB 8327) (Chlorobium vibrioforme subsp. thiosulfatophilum) protein is Large ribosomal subunit protein bL25.